Here is a 318-residue protein sequence, read N- to C-terminus: Pantothenate kinase (318 aa).

96-103 (GSVSVGKS) lines the ATP pocket.

The protein belongs to the prokaryotic pantothenate kinase family.

Its subcellular location is the cytoplasm. The catalysed reaction is (R)-pantothenate + ATP = (R)-4'-phosphopantothenate + ADP + H(+). It participates in cofactor biosynthesis; coenzyme A biosynthesis; CoA from (R)-pantothenate: step 1/5. This chain is Pantothenate kinase, found in Bradyrhizobium sp. (strain ORS 278).